Here is a 505-residue protein sequence, read N- to C-terminus: ADP-ribosylarginine hydrolase CG2909 (505 aa).

The ADP-D-ribose site is built by Arg-198, Gly-336, Gly-338, Gly-340, Val-341, Trp-342, Trp-377, Asp-432, Asn-439, Glu-440, Gly-450, and Asp-451.

The catalysed reaction is N(omega)-(ADP-D-ribosyl)-L-arginyl-[protein] + H2O = ADP-D-ribose + L-arginyl-[protein]. It catalyses the reaction N(omega)-(ADP-D-ribosyl)-L-arginine + H2O = ADP-D-ribose + L-arginine. Protein ADP-ribosyl hydrolase that specifically removes mono-ADP-ribosyl modifications from protein arginine residues. This chain is ADP-ribosylarginine hydrolase CG2909, found in Drosophila melanogaster (Fruit fly).